The sequence spans 433 residues: Pyrimidine-nucleoside phosphorylase (433 aa).

81 to 83 (KHS) serves as a coordination point for phosphate. Residues Gly88 and Thr90 each coordinate K(+). Phosphate contacts are provided by residues Thr92, 108–110 (KMS), and Thr120. Residues Arg168 and Lys187 each coordinate substrate. K(+) is bound by residues Leu243, Ala246, and Glu255.

The protein belongs to the thymidine/pyrimidine-nucleoside phosphorylase family. Homodimer. It depends on K(+) as a cofactor.

The catalysed reaction is uridine + phosphate = alpha-D-ribose 1-phosphate + uracil. It catalyses the reaction thymidine + phosphate = 2-deoxy-alpha-D-ribose 1-phosphate + thymine. The enzyme catalyses 2'-deoxyuridine + phosphate = 2-deoxy-alpha-D-ribose 1-phosphate + uracil. Its function is as follows. Catalyzes phosphorolysis of the pyrimidine nucleosides uridine, thymidine and 2'-deoxyuridine with the formation of the corresponding pyrimidine base and ribose-1-phosphate. This is Pyrimidine-nucleoside phosphorylase (pdp) from Staphylococcus epidermidis (strain ATCC 35984 / DSM 28319 / BCRC 17069 / CCUG 31568 / BM 3577 / RP62A).